The following is a 461-amino-acid chain: Cysteine--tRNA ligase (461 aa).

C31 contributes to the Zn(2+) binding site. The 'HIGH' region motif lies at 33–43; it reads PTVYDFAHIGN. Zn(2+) contacts are provided by C219, H244, and E248. A 'KMSKS' region motif is present at residues 277 to 281; that stretch reads KMSKS. ATP is bound at residue K280. The span at 436 to 452 shows a compositional bias: basic and acidic residues; the sequence is SEKGIQLKDGKDKETGE. The interval 436–461 is disordered; that stretch reads SEKGIQLKDGKDKETGERTTTWELKR.

Belongs to the class-I aminoacyl-tRNA synthetase family. Monomer. Zn(2+) serves as cofactor.

The protein resides in the cytoplasm. The enzyme catalyses tRNA(Cys) + L-cysteine + ATP = L-cysteinyl-tRNA(Cys) + AMP + diphosphate. The chain is Cysteine--tRNA ligase from Agrobacterium fabrum (strain C58 / ATCC 33970) (Agrobacterium tumefaciens (strain C58)).